The chain runs to 201 residues: Small ribosomal subunit protein uS4 (201 aa).

Residues 1-42 (MARYTGPVTRKSRRLGTDLVGGDQSFEKRPYPPGQHGRARIK) form a disordered region. Positions 91–157 (SRLDNVVYRA…VPFQIARETA (67 aa)) constitute an S4 RNA-binding domain.

The protein belongs to the universal ribosomal protein uS4 family. Part of the 30S ribosomal subunit. Contacts protein S5. The interaction surface between S4 and S5 is involved in control of translational fidelity.

In terms of biological role, one of the primary rRNA binding proteins, it binds directly to 16S rRNA where it nucleates assembly of the body of the 30S subunit. Functionally, with S5 and S12 plays an important role in translational accuracy. The sequence is that of Small ribosomal subunit protein uS4 from Mycobacterium marinum (strain ATCC BAA-535 / M).